Consider the following 557-residue polypeptide: Fatty acyl-CoA hydrolase precursor, medium chain (557 aa).

The N-terminal stretch at 1-25 is a signal peptide; that stretch reads MATEKNTLLSLILTAGITALVATGQ. Cys-93 and Cys-122 are disulfide-bonded. Ser-227 (acyl-ester intermediate) is an active-site residue. Catalysis depends on charge relay system residues Glu-345 and His-460. A glycan (N-linked (GlcNAc...) asparagine) is linked at Asn-476.

This sequence belongs to the type-B carboxylesterase/lipase family. Highest levels in uropygial gland, much lower in liver and kidney.

In terms of biological role, fatty acid biosynthesis chain termination and release of the free fatty acid product is achieved by hydrolysis of the thio ester by a thioesterase. This thioesterase may be associated with peroxisome proliferation and may play a role in the production of 3-hydroxy fatty acid diester pheromones. This Anas platyrhynchos (Mallard) protein is Fatty acyl-CoA hydrolase precursor, medium chain.